The chain runs to 245 residues: Tegument protein UL51 homolog (245 aa).

A lipid anchor (S-palmitoyl cysteine; by host) is attached at C10. Residues 225–245 (PVKSNLKSKHKPKRKASLVAV) are disordered. A compositionally biased stretch (basic residues) spans 230-245 (LKSKHKPKRKASLVAV).

Belongs to the herpesviridae UL51 family. As to quaternary structure, oligomerizes. Interacts with ORF55; this interaction mediates ORF55 incorporation to virions. Phosphorylated. Post-translationally, palmitoylation is necessary for Golgi localization.

The protein localises to the virion tegument. It localises to the host cytoplasm. It is found in the host Golgi apparatus. Plays several roles during the time course of infection, including egress of virus particles from the perinuclear space and secondary envelopment of cytoplasmic capsids that bud into specific trans-Golgi network (TGN)-derived membranes. This chain is Tegument protein UL51 homolog, found in Equine herpesvirus 1 (strain Ab4p) (EHV-1).